A 507-amino-acid chain; its full sequence is ATP synthase subunit alpha, chloroplastic (507 aa).

170-177 (GDRQTGKT) lines the ATP pocket.

This sequence belongs to the ATPase alpha/beta chains family. In terms of assembly, F-type ATPases have 2 components, CF(1) - the catalytic core - and CF(0) - the membrane proton channel. CF(1) has five subunits: alpha(3), beta(3), gamma(1), delta(1), epsilon(1). CF(0) has four main subunits: a, b, b' and c.

The protein localises to the plastid. The protein resides in the chloroplast thylakoid membrane. It catalyses the reaction ATP + H2O + 4 H(+)(in) = ADP + phosphate + 5 H(+)(out). In terms of biological role, produces ATP from ADP in the presence of a proton gradient across the membrane. The alpha chain is a regulatory subunit. The protein is ATP synthase subunit alpha, chloroplastic of Ceratophyllum demersum (Rigid hornwort).